The chain runs to 150 residues: 3-dehydroquinate dehydratase (150 aa).

The Proton acceptor role is filled by Tyr26. Substrate is bound by residues Asn77, His83, and Asp90. Residue His103 is the Proton donor of the active site. Substrate-binding positions include 104–105 (LS) and Arg114.

The protein belongs to the type-II 3-dehydroquinase family. In terms of assembly, homododecamer.

It carries out the reaction 3-dehydroquinate = 3-dehydroshikimate + H2O. It functions in the pathway metabolic intermediate biosynthesis; chorismate biosynthesis; chorismate from D-erythrose 4-phosphate and phosphoenolpyruvate: step 3/7. Catalyzes a trans-dehydration via an enolate intermediate. This chain is 3-dehydroquinate dehydratase, found in Histophilus somni (strain 129Pt) (Haemophilus somnus).